The following is a 215-amino-acid chain: Uridine kinase (215 aa).

Position 16–23 (16–23) interacts with ATP; it reads GASASGKS.

This sequence belongs to the uridine kinase family.

The protein localises to the cytoplasm. The catalysed reaction is uridine + ATP = UMP + ADP + H(+). It catalyses the reaction cytidine + ATP = CMP + ADP + H(+). It functions in the pathway pyrimidine metabolism; CTP biosynthesis via salvage pathway; CTP from cytidine: step 1/3. Its pathway is pyrimidine metabolism; UMP biosynthesis via salvage pathway; UMP from uridine: step 1/1. The protein is Uridine kinase of Aliivibrio fischeri (strain ATCC 700601 / ES114) (Vibrio fischeri).